A 154-amino-acid polypeptide reads, in one-letter code: Hydroperoxy fatty acid reductase Gpx2 (154 aa).

Cysteine 34 is an active-site residue.

Belongs to the glutathione peroxidase family. In terms of assembly, monomer.

The catalysed reaction is a hydroperoxy polyunsaturated fatty acid + NADPH + H(+) = a hydroxy polyunsaturated fatty acid + NADP(+) + H2O. Its activity is regulated as follows. Mercaptosuccinate, pCMB, and nethylmaleimide act as inhibitors of the catalytic activity. Its function is as follows. Hydroperoxy fatty acid reductase essential for the removal of lipid hydroperoxides under normal and stress conditions, leading to the protection of membrane integrity. This chain is Hydroperoxy fatty acid reductase Gpx2 (gpx2), found in Synechocystis sp. (strain ATCC 27184 / PCC 6803 / Kazusa).